The sequence spans 140 residues: Small ribosomal subunit protein uS9 (140 aa).

It belongs to the universal ribosomal protein uS9 family.

The sequence is that of Small ribosomal subunit protein uS9 from Desulfurococcus amylolyticus (strain DSM 18924 / JCM 16383 / VKM B-2413 / 1221n) (Desulfurococcus kamchatkensis).